Reading from the N-terminus, the 175-residue chain is uncharacterized protein (175 aa).

Its subcellular location is the cytoplasm. The protein resides in the nucleus. This is an uncharacterized protein from Schizosaccharomyces pombe (strain 972 / ATCC 24843) (Fission yeast).